We begin with the raw amino-acid sequence, 245 residues long: PF03932 family protein CutC (245 aa).

It belongs to the CutC family.

The protein resides in the cytoplasm. The protein is PF03932 family protein CutC of Caulobacter vibrioides (strain ATCC 19089 / CIP 103742 / CB 15) (Caulobacter crescentus).